The primary structure comprises 294 residues: Large ribosomal subunit protein uL2c (294 aa).

The segment at 224–249 is disordered; sequence VMNPVDHPHGGGGEGKSPIGRSRPVT.

The protein belongs to the universal ribosomal protein uL2 family. In terms of assembly, part of the 50S ribosomal subunit.

Its subcellular location is the plastid. It is found in the chloroplast. The protein is Large ribosomal subunit protein uL2c (rpl2) of Porphyra purpurea (Red seaweed).